We begin with the raw amino-acid sequence, 632 residues long: Phosphatidylinositol-3,5-bisphosphate 3-phosphatase MTMR8 (632 aa).

One can recognise a Myotubularin phosphatase domain in the interval 126 to 500 (GWELISVVND…LHFKFWCGMY (375 aa)). Positions 250, 275, and 276 each coordinate a 1,2-diacyl-sn-glycero-3-phospho-(1D-myo-inositol-3,5-bisphosphate). A 1,2-diacyl-sn-glycero-3-phospho-(1D-myo-inositol-3-phosphate) contacts are provided by N250, N275, and I276. C338 functions as the Phosphocysteine intermediate in the catalytic mechanism. A 1,2-diacyl-sn-glycero-3-phospho-(1D-myo-inositol-3,5-bisphosphate)-binding residues include S339, D340, G341, W342, D343, R344, K380, and R384. A 1,2-diacyl-sn-glycero-3-phospho-(1D-myo-inositol-3-phosphate) contacts are provided by S339, D340, G341, W342, D343, and R344. Phosphate-binding residues include S339 and D340. W342, D343, and R344 together coordinate phosphate. A 1,2-diacyl-sn-glycero-3-phospho-(1D-myo-inositol-3-phosphate) is bound at residue R384. Residues 545-632 (LPDPAGPINT…HSKEEVQESS (88 aa)) are disordered. The span at 602-632 (EPAANEHDLSSKDKPVFVETEHSKEEVQESS) shows a compositional bias: basic and acidic residues.

It belongs to the protein-tyrosine phosphatase family. Non-receptor class myotubularin subfamily. Homodimer.

The protein localises to the nucleus envelope. It catalyses the reaction a 1,2-diacyl-sn-glycero-3-phospho-(1D-myo-inositol-3,5-bisphosphate) + H2O = a 1,2-diacyl-sn-glycero-3-phospho-(1D-myo-inositol-5-phosphate) + phosphate. It carries out the reaction a 1,2-diacyl-sn-glycero-3-phospho-(1D-myo-inositol-3-phosphate) + H2O = a 1,2-diacyl-sn-glycero-3-phospho-(1D-myo-inositol) + phosphate. The catalysed reaction is 1,2-dioctanoyl-sn-glycero-3-phospho-(1D-myo-inositol-3,5-bisphosphate) + H2O = 1,2-dioctanoyl-sn-glycero-3-phospho-(1D-myo-inositol-5-phosphate) + phosphate. In terms of biological role, lipid phosphatase that specifically dephosphorylates the D-3 position of phosphatidylinositol 3-phosphate and phosphatidylinositol 3,5-bisphosphate, generating phosphatidylinositol and phosphatidylinositol 5-phosphate. In Danio rerio (Zebrafish), this protein is Phosphatidylinositol-3,5-bisphosphate 3-phosphatase MTMR8 (mtmr8).